The primary structure comprises 317 residues: L-lactate dehydrogenase 2 (317 aa).

NAD(+)-binding positions include V16, D37, K42, Y68, and 82–83; that span reads GA. Substrate is bound by residues Q85 and R91. Residues T104, 121–123, and T146 contribute to the NAD(+) site; that span reads ASN. Residue 123–126 participates in substrate binding; that stretch reads NPVD. 151 to 154 contributes to the substrate binding site; sequence DTTR. R156 and H171 together coordinate beta-D-fructose 1,6-bisphosphate. The active-site Proton acceptor is the H178. Y223 carries the post-translational modification Phosphotyrosine. T232 contacts substrate.

It belongs to the LDH/MDH superfamily. LDH family. In terms of assembly, homotetramer.

It is found in the cytoplasm. It catalyses the reaction (S)-lactate + NAD(+) = pyruvate + NADH + H(+). It participates in fermentation; pyruvate fermentation to lactate; (S)-lactate from pyruvate: step 1/1. With respect to regulation, allosterically activated by fructose 1,6-bisphosphate (FBP). Its function is as follows. Catalyzes the conversion of lactate to pyruvate. The protein is L-lactate dehydrogenase 2 of Enterococcus faecalis (strain ATCC 700802 / V583).